The chain runs to 186 residues: Ribosome-recycling factor (186 aa).

The protein belongs to the RRF family.

The protein resides in the cytoplasm. Its function is as follows. Responsible for the release of ribosomes from messenger RNA at the termination of protein biosynthesis. May increase the efficiency of translation by recycling ribosomes from one round of translation to another. This is Ribosome-recycling factor from Polaromonas naphthalenivorans (strain CJ2).